A 494-amino-acid chain; its full sequence is MFS-type transporter lnaF (494 aa).

The segment at 1–51 (MTYDPENAMGEARADAPVEAEKEHEATQTTVKESTLGYDNSSDPSRRDSYR) is disordered. Basic and acidic residues predominate over residues 12–26 (ARADAPVEAEKEHEA). 3 N-linked (GlcNAc...) asparagine glycosylation sites follow: N40, N58, and N68. 10 helical membrane passes run 105–125 (SLLI…DMFS), 128–148 (AGLL…TLAL), 156–176 (MLWY…GEYP), 203–223 (TLMA…CLIA), 228–248 (LPVT…IIMV), 290–310 (LAFF…STII), 323–343 (AIWQ…GAWL), 354–374 (ILGF…FPHL), 383–403 (VLYG…IGLI), and 446–466 (STFY…WFLP).

The protein belongs to the major facilitator superfamily. Sugar transporter (TC 2.A.1.1) family.

The protein resides in the cell membrane. In terms of biological role, MFS-type transporter; part of the lna gene cluster that mediates the biosynthesis of diastereomeric piperazines. Lna and lnb clusters encode sets of enzymes that produce overlapping sets of previously undescribed metabolites such as piperazinomycin-like metabolites or morpholine. The lna and lnb biosynthetic pathways appear to be part of a signaling network that controls the formation of sclerotia, a resilient overwintering structure. May be involved in the secretion of the metabolites produced by the lna and lnb clusters. The polypeptide is MFS-type transporter lnaF (Aspergillus flavus (strain ATCC 200026 / FGSC A1120 / IAM 13836 / NRRL 3357 / JCM 12722 / SRRC 167)).